The following is a 182-amino-acid chain: UPF0301 protein NMC1274 (182 aa).

Belongs to the UPF0301 (AlgH) family.

In Neisseria meningitidis serogroup C / serotype 2a (strain ATCC 700532 / DSM 15464 / FAM18), this protein is UPF0301 protein NMC1274.